A 449-amino-acid chain; its full sequence is GTPase Der (449 aa).

2 EngA-type G domains span residues 3–167 (SIVA…PDEP) and 175–350 (TNIA…EQYS). Residues 9–16 (GRPNVGKS), 56–60 (DTGGF), 119–122 (NKVD), 181–188 (GRPNVGKS), 228–232 (DTAGI), and 293–296 (NKWD) each bind GTP. One can recognise a KH-like domain in the interval 351-435 (RRVTTSELNR…PFRLLFRGRE (85 aa)).

The protein belongs to the TRAFAC class TrmE-Era-EngA-EngB-Septin-like GTPase superfamily. EngA (Der) GTPase family. As to quaternary structure, associates with the 50S ribosomal subunit.

In terms of biological role, GTPase that plays an essential role in the late steps of ribosome biogenesis. This chain is GTPase Der, found in Trichlorobacter lovleyi (strain ATCC BAA-1151 / DSM 17278 / SZ) (Geobacter lovleyi).